Consider the following 347-residue polypeptide: Very-long-chain 3-oxoacyl-CoA reductase (347 aa).

A helical transmembrane segment spans residues 22–42 (LLWSIFGFGVLKATTLILRIM). Val68, Asp122, Asn149, Tyr223, Lys227, Val256, and Ser258 together coordinate NADP(+). The active-site Proton donor is Tyr223. Lys227 serves as the catalytic Lowers pKa of active site Tyr.

It belongs to the short-chain dehydrogenases/reductases (SDR) family.

It localises to the endoplasmic reticulum membrane. It carries out the reaction a very-long-chain (3R)-3-hydroxyacyl-CoA + NADP(+) = a very-long-chain 3-oxoacyl-CoA + NADPH + H(+). It participates in lipid metabolism; fatty acid biosynthesis. Functionally, component of the microsomal membrane bound fatty acid elongation system, which produces the 26-carbon very long-chain fatty acids (VLCFA) from palmitate. Catalyzes the reduction of the 3-ketoacyl-CoA intermediate that is formed in each cycle of fatty acid elongation. VLCFAs serve as precursors for ceramide and sphingolipids. In Vanderwaltozyma polyspora (strain ATCC 22028 / DSM 70294 / BCRC 21397 / CBS 2163 / NBRC 10782 / NRRL Y-8283 / UCD 57-17) (Kluyveromyces polysporus), this protein is Very-long-chain 3-oxoacyl-CoA reductase.